A 319-amino-acid polypeptide reads, in one-letter code: Coiled-coil domain-containing protein PF3D7_1144200 (319 aa).

A compositionally biased stretch (basic and acidic residues) spans 1-12 (MSEEHSNDHIED). Disordered stretches follow at residues 1 to 43 (MSEE…SESS) and 112 to 158 (KLEK…NQHN). Residues 16 to 26 (CSQNCDETNSP) are compositionally biased toward polar residues. Composition is skewed to basic and acidic residues over residues 27 to 36 (KNEKDEKDFK) and 112 to 131 (KLEK…KKVT). Coiled-coil stretches lie at residues 100–134 (DLAN…TNDS), 166–242 (ELNE…IKKN), and 281–310 (NSNC…LINI). Residues 132–150 (NDSTNNKNKNNSVPFLNEN) are compositionally biased toward low complexity.

The polypeptide is Coiled-coil domain-containing protein PF3D7_1144200 (Plasmodium falciparum (isolate 3D7)).